Consider the following 55-residue polypeptide: Large ribosomal subunit protein bL33 (55 aa).

The protein belongs to the bacterial ribosomal protein bL33 family.

The chain is Large ribosomal subunit protein bL33 from Yersinia enterocolitica serotype O:8 / biotype 1B (strain NCTC 13174 / 8081).